The following is a 2344-amino-acid chain: Genome polyprotein (2344 aa).

Positions 492 to 653 (QKVISDLHTM…ESWQATRHGS (162 aa)) constitute an SF3 helicase domain. 522 to 529 (GAPGIGKT) lines the ATP pocket. Residue Tyr-1014 is modified to O-(5'-phospho-RNA)-tyrosine. Residue Tyr-1014 is modified to O-UMP-tyrosine; transient. The Peptidase C24 domain occupies 1109–1244 (GLPGFMRHNG…SKMCTLIDLT (136 aa)). Residues His-1135, Asp-1152, and Cys-1212 each act as for 3CLpro activity in the active site. Positions 1495–1619 (SDFLCLDYSK…AMTPMMVSLL (125 aa)) constitute a RdRp catalytic domain. An intrachain disulfide couples Cys-1584 to Cys-1591. The segment at 1774 to 1796 (PQGEAARTATTASVPGTTTDGMD) is disordered. Positions 1781 to 1792 (TATTASVPGTTT) are enriched in low complexity.

Homodimer. As to quaternary structure, homomultimer. Interacts with host type II histo-blood group structures antigens at the surface of target cells. It depends on Mn(2+) as a cofactor. In terms of processing, specific enzymatic cleavages by its own cysteine protease yield mature proteins. The protease cleaves itself from the nascent polyprotein autocatalytically. Precursor p41 can be cleaved by viral 3CLpro into protein p19 and VPg, or cleaved by host protease into protein p23/2 and protein p18. Post-translationally, VPg is uridylylated by the polymerase and is covalently attached to the 5'-end of the polyadenylated genomic and subgenomic RNAs. This uridylylated form acts as a nucleotide-peptide primer for the polymerase.

It localises to the host cytoplasm. Its subcellular location is the host endoplasmic reticulum. The protein resides in the virion. It carries out the reaction a ribonucleoside 5'-triphosphate + H2O = a ribonucleoside 5'-diphosphate + phosphate + H(+). It catalyses the reaction Endopeptidase with a preference for cleavage when the P1 position is occupied by Glu-|-Xaa and the P1' position is occupied by Gly-|-Yaa.. The enzyme catalyses RNA(n) + a ribonucleoside 5'-triphosphate = RNA(n+1) + diphosphate. Functionally, together with NTPase and NS4, initiates the formation of the replication complex. Induces the proliferation of the host smooth ER membranes forming long tubular structures. These remodeled membranes probably form the viral factories that contain the replication complex. In terms of biological role, displays NTPase activity, but no helicase activity. Induces the formation of convoluted membranes derived from the host ER. These remodeled membranes probably form the viral factories that contain the replication complex. Together with NS2 and NS4, initiates the formation of the replication complex. Its function is as follows. Probable key protein responsible for the formation of membrane alterations by the virus. Induces the formation of convoluted membranes derived from the host ER. These remodeled membranes probably form the viral factories that contain the replication complex. Together with NS2 and NTPase, initiates the formation of the replication complex. Viral genome-linked protein is covalently linked to the 5'-end of the positive-strand, negative-strand genomic RNAs and subgenomic RNA. Acts as a genome-linked replication primer. May recruit ribosome to viral RNA thereby promoting viral proteins translation. Interacts with host translation initiation complex to allow the translation of viral proteins. Functionally, processes the polyprotein. 3CLpro-RdRp is first released by autocleavage, then all other proteins are cleaved. May cleave polyadenylate-binding protein thereby inhibiting cellular translation. In terms of biological role, replicates genomic and antigenomic RNA by recognizing replications specific signals. Also transcribes a subgenomic mRNA by initiating RNA synthesis internally on antigenomic RNA. This sgRNA codes for structural proteins. Catalyzes the covalent attachment VPg with viral RNAs. Its function is as follows. Capsid protein VP60 self assembles to form an icosahedral capsid with a T=3 symmetry, about 35 nm in diameter, and consisting of 180 capsid proteins. A smaller form of capsid with a diameter of 23 nm might be capsid proteins assembled as icosahedron with T=1 symmetry. The capsid encapsulate VP2 proteins and genomic or subgenomic RNA. Attaches virion to target cells by binding histo-blood group antigens, inducing endocytosis of the viral particle. Acidification of the endosome induces conformational change of capsid protein thereby injecting virus genomic RNA into host cytoplasm. This chain is Genome polyprotein, found in Oryctolagus cuniculus (Rabbit).